A 261-amino-acid chain; its full sequence is uncharacterized protein (261 aa).

Residues I33, D78, and N105 each coordinate NADP(+). S157 serves as the catalytic Proton donor. NADP(+) contacts are provided by Y172, K176, and S206. The active-site Proton acceptor is the Y172. The active-site Lowers pKa of active site Tyr is K176.

This sequence belongs to the short-chain dehydrogenases/reductases (SDR) family.

The protein localises to the cytoplasm. It localises to the nucleus. This is an uncharacterized protein from Schizosaccharomyces pombe (strain 972 / ATCC 24843) (Fission yeast).